The sequence spans 1295 residues: Phosphoribosylformylglycinamidine synthase (1295 aa).

Residues Trp305 to Lys327 form a disordered region. Residues Gly307 to Asp318, Thr386 to Tyr388, and Ala678 each bind ATP. Mg(2+)-binding residues include Asp679, Glu718, Asn722, and Asp884. Ser886 lines the ATP pocket. In terms of domain architecture, Glutamine amidotransferase type-1 spans Lys1041 to Gly1295. Cys1135 (nucleophile) is an active-site residue. Residues His1260 and Glu1262 contribute to the active site.

It in the N-terminal section; belongs to the FGAMS family. Monomer.

The protein localises to the cytoplasm. The catalysed reaction is N(2)-formyl-N(1)-(5-phospho-beta-D-ribosyl)glycinamide + L-glutamine + ATP + H2O = 2-formamido-N(1)-(5-O-phospho-beta-D-ribosyl)acetamidine + L-glutamate + ADP + phosphate + H(+). The protein operates within purine metabolism; IMP biosynthesis via de novo pathway; 5-amino-1-(5-phospho-D-ribosyl)imidazole from N(2)-formyl-N(1)-(5-phospho-D-ribosyl)glycinamide: step 1/2. Phosphoribosylformylglycinamidine synthase involved in the purines biosynthetic pathway. Catalyzes the ATP-dependent conversion of formylglycinamide ribonucleotide (FGAR) and glutamine to yield formylglycinamidine ribonucleotide (FGAM) and glutamate. This is Phosphoribosylformylglycinamidine synthase from Salmonella choleraesuis (strain SC-B67).